We begin with the raw amino-acid sequence, 193 residues long: Dirigent protein (193 aa).

Residues 1–29 form the signal peptide; it reads MGGEKAFSFIFLLFLCFFLANLSASSAHP. Cysteines 40 and 192 form a disulfide. Residues N59 and N129 are each glycosylated (N-linked (GlcNAc...) asparagine).

It belongs to the plant dirigent protein family. In terms of assembly, homodimer. In terms of tissue distribution, expressed in rhizomes, stems, and leaves.

It is found in the secreted. The protein localises to the extracellular space. The protein resides in the apoplast. Its pathway is aromatic compound metabolism; phenylpropanoid biosynthesis. Its function is as follows. Dirigent proteins impart stereoselectivity on the phenoxy radical-coupling reaction, yielding optically active lignans from two molecules of coniferyl alcohol in the biosynthesis of lignans, flavonolignans, and alkaloids and thus plays a central role in plant secondary metabolism. Also involved in the biosynthesis of etoposide, a chemotherapeutic compound of the topoisomerase inhibitor family. The protein is Dirigent protein of Sinopodophyllum hexandrum (Himalayan may apple).